We begin with the raw amino-acid sequence, 137 residues long: Phosphoribosyl-AMP cyclohydrolase (137 aa).

Residue D84 coordinates Mg(2+). A Zn(2+)-binding site is contributed by C85. Residues D86 and D88 each contribute to the Mg(2+) site. C101 and C108 together coordinate Zn(2+).

Belongs to the PRA-CH family. As to quaternary structure, homodimer. Requires Mg(2+) as cofactor. Zn(2+) serves as cofactor.

The protein resides in the cytoplasm. The enzyme catalyses 1-(5-phospho-beta-D-ribosyl)-5'-AMP + H2O = 1-(5-phospho-beta-D-ribosyl)-5-[(5-phospho-beta-D-ribosylamino)methylideneamino]imidazole-4-carboxamide. The protein operates within amino-acid biosynthesis; L-histidine biosynthesis; L-histidine from 5-phospho-alpha-D-ribose 1-diphosphate: step 3/9. Functionally, catalyzes the hydrolysis of the adenine ring of phosphoribosyl-AMP. The protein is Phosphoribosyl-AMP cyclohydrolase of Chlorobaculum tepidum (strain ATCC 49652 / DSM 12025 / NBRC 103806 / TLS) (Chlorobium tepidum).